A 763-amino-acid chain; its full sequence is Protein translocase subunit SecA 2 (763 aa).

ATP contacts are provided by residues glutamine 83, 101–105 (GEGKT), and aspartate 490.

Belongs to the SecA family. As to quaternary structure, monomer and homodimer. Part of the essential Sec protein translocation apparatus which comprises SecA, SecYEG and auxiliary proteins SecDF. Other proteins may also be involved.

It localises to the cell membrane. The protein localises to the cytoplasm. It catalyses the reaction ATP + H2O + cellular proteinSide 1 = ADP + phosphate + cellular proteinSide 2.. Part of the Sec protein translocase complex. Interacts with the SecYEG preprotein conducting channel. Has a central role in coupling the hydrolysis of ATP to the transfer of proteins into and across the cell membrane, serving as an ATP-driven molecular motor driving the stepwise translocation of polypeptide chains across the membrane. This Corynebacterium glutamicum (strain ATCC 13032 / DSM 20300 / JCM 1318 / BCRC 11384 / CCUG 27702 / LMG 3730 / NBRC 12168 / NCIMB 10025 / NRRL B-2784 / 534) protein is Protein translocase subunit SecA 2.